Reading from the N-terminus, the 124-residue chain is Small ribosomal subunit protein uS13 (124 aa).

A disordered region spans residues 94–124; sequence GLPLRGQRTKNNSRTRKGKRKTVANKKKATK. Residues 100-124 are compositionally biased toward basic residues; it reads QRTKNNSRTRKGKRKTVANKKKATK.

The protein belongs to the universal ribosomal protein uS13 family. Part of the 30S ribosomal subunit. Forms a loose heterodimer with protein S19. Forms two bridges to the 50S subunit in the 70S ribosome.

Functionally, located at the top of the head of the 30S subunit, it contacts several helices of the 16S rRNA. In the 70S ribosome it contacts the 23S rRNA (bridge B1a) and protein L5 of the 50S subunit (bridge B1b), connecting the 2 subunits; these bridges are implicated in subunit movement. Contacts the tRNAs in the A and P-sites. This chain is Small ribosomal subunit protein uS13, found in Flavobacterium psychrophilum (strain ATCC 49511 / DSM 21280 / CIP 103535 / JIP02/86).